We begin with the raw amino-acid sequence, 124 residues long: uncharacterized protein (124 aa).

A disordered region spans residues 82–124 (SDLGIEGGERAQGQNAHSVHGPGLQTERGGSQLQMVGHPLREL).

This is an uncharacterized protein from Human cytomegalovirus (strain AD169) (HHV-5).